The primary structure comprises 317 residues: Large ribosomal subunit protein uL10 (317 aa).

This sequence belongs to the universal ribosomal protein uL10 family. As to quaternary structure, P0 forms a pentameric complex by interaction with dimers of P1 and P2. Post-translationally, phosphorylated.

Ribosomal protein P0 is the functional equivalent of E.coli protein L10. The polypeptide is Large ribosomal subunit protein uL10 (rplp0) (Ictalurus punctatus (Channel catfish)).